Consider the following 359-residue polypeptide: Peptide chain release factor 1 (359 aa).

Gln-236 is subject to N5-methylglutamine.

Belongs to the prokaryotic/mitochondrial release factor family. Post-translationally, methylated by PrmC. Methylation increases the termination efficiency of RF1.

Its subcellular location is the cytoplasm. Functionally, peptide chain release factor 1 directs the termination of translation in response to the peptide chain termination codons UAG and UAA. In Streptococcus pneumoniae serotype 19F (strain G54), this protein is Peptide chain release factor 1.